The following is a 361-amino-acid chain: NudC domain-containing protein 3 (361 aa).

The segment covering 87–97 (KIRRKEEEEAK) has biased composition (basic and acidic residues). Disordered stretches follow at residues 87–106 (KIRRKEEEEAKTVSAAAAEK) and 124–158 (LDGHQEVEKVQPPGPVKEMAHGSQEAEAPGAVAGA). Position 146 is a phosphoserine (serine 146). Over residues 148–158 (EAEAPGAVAGA) the composition is skewed to low complexity. One can recognise a CS domain in the interval 185 to 277 (AVRENYTWSQ…VGEYWWNAIL (93 aa)). A phosphoserine mark is found at serine 340 and serine 355.

This Homo sapiens (Human) protein is NudC domain-containing protein 3 (NUDCD3).